A 263-amino-acid chain; its full sequence is MGWLDFSSKSKKEEKDDTRPSFTWGDNLNATDWQHYTDPRTVIPTILLTTTILVSTRLYRSYLRRIPEAAYIRPGFFRKRSLFGTVTRVGDADNFHLFHTPGGRLAGWGWMPGRKKLPEGKDLKNKTIHVRIAGVDAPEGAHFGKPAQPFSAEALAWLREYIQNRRVRAYIYKRDQYDRVVATVWVRRFLVRKDVGKEMLRAGMATVYEAKMGAEFGDFEAQYRAIEEEAKKKKLGMWSGKKKDYESPRDYKTRTANAAKMLK.

The disordered stretch occupies residues 1 to 21 (MGWLDFSSKSKKEEKDDTRPS). A compositionally biased stretch (basic and acidic residues) spans 8–19 (SKSKKEEKDDTR). The helical transmembrane segment at 41 to 59 (TVIPTILLTTTILVSTRLY) threads the bilayer. The TNase-like domain occupies 80 to 240 (RSLFGTVTRV…KKKKLGMWSG (161 aa)). Arginine 131 is a catalytic residue. Residue aspartate 136 participates in Ca(2+) binding. Active-site residues include glutamate 139 and arginine 179. The interval 236–263 (GMWSGKKKDYESPRDYKTRTANAAKMLK) is disordered. Over residues 241–253 (KKKDYESPRDYKT) the composition is skewed to basic and acidic residues.

This sequence belongs to the LCL3 family.

The protein resides in the mitochondrion. It is found in the membrane. This chain is Probable endonuclease lcl3 (lcl3), found in Botryotinia fuckeliana (strain B05.10) (Noble rot fungus).